A 965-amino-acid polypeptide reads, in one-letter code: Valine--tRNA ligase (965 aa).

The tract at residues 1-22 is disordered; it reads MENTPSHINKTEPSLDKTYSPQ. The short motif at 56–66 is the 'HIGH' region element; that stretch reads PNVTGSLHMGH. Residues 568–572 carry the 'KMSKS' region motif; the sequence is KMSKS. Lysine 571 lines the ATP pocket. Residues 896–965 are a coiled coil; that stretch reads LIDKATELDR…IEQQATIAAL (70 aa).

This sequence belongs to the class-I aminoacyl-tRNA synthetase family. ValS type 1 subfamily. Monomer.

It localises to the cytoplasm. The enzyme catalyses tRNA(Val) + L-valine + ATP = L-valyl-tRNA(Val) + AMP + diphosphate. In terms of biological role, catalyzes the attachment of valine to tRNA(Val). As ValRS can inadvertently accommodate and process structurally similar amino acids such as threonine, to avoid such errors, it has a 'posttransfer' editing activity that hydrolyzes mischarged Thr-tRNA(Val) in a tRNA-dependent manner. The chain is Valine--tRNA ligase from Yersinia pseudotuberculosis serotype I (strain IP32953).